A 417-amino-acid chain; its full sequence is MSTRYHQAASDSYLELLKEATKRDLNLSDEDGMTPTLLAAYHGNLEALEIICSRGGDPDRCDIWGNTPLHFAASNGHAHCVSFLVNFGANIFALDNDLQTPLDAAASREQNECVALLDKAATAQNIMNPKKVTRLKEQAQKNARRQIKECERLQEKHQNKMAHTYSKEESGTLSSSKGTFSRSSPSNASAPGTFGSLSKGIKDTFKIKFKKNKDTAEQVGKEGRSGQRNVMEVFREEEEDSFSGDFKEKLQLSAEEDGSVHHESILNRPGLGSIVFRRNRISSPEDISDSKREFGFKLPSELLQRQGASEADEGAADEEGEENGLKDDLPWDDDEVEWEEDVVDATPLEVFLLSQHLEEFLPIFKREQIDLEALLLCSDEDLQSIQMQLGPRKKVLNAINRRKQVLQQPGQLVDTSL.

The interval 1–252 (MSTRYHQAAS…SGDFKEKLQL (252 aa)) is mediates localization to microvilli. ANK repeat units follow at residues 31–60 (DGMT…DPDR), 64–93 (WGNT…NIFA), and 97–126 (DLQT…AQNI). A coiled-coil region spans residues 130-164 (KKVTRLKEQAQKNARRQIKECERLQEKHQNKMAHT). Positions 151-195 (ERLQEKHQNKMAHTYSKEESGTLSSSKGTFSRSSPSNASAPGTFG) are disordered. The segment covering 171 to 190 (GTLSSSKGTFSRSSPSNASA) has biased composition (polar residues). Residues 253 to 346 (SAEEDGSVHH…EWEEDVVDAT (94 aa)) form a mediates interaction with MYO7B region. At S283 the chain carries Phosphoserine. Residues 305–330 (RQGASEADEGAADEEGEENGLKDDLP) are disordered. A compositionally biased stretch (acidic residues) spans 310 to 322 (EADEGAADEEGEE). The region spanning 351–403 (FLLSQHLEEFLPIFKREQIDLEALLLCSDEDLQSIQMQLGPRKKVLNAINRRK) is the SAM domain. Positions 415–417 (TSL) match the PDZ-binding; mediates interaction with USH1C motif.

Part of the IMAC/intermicrovillar adhesion complex/intermicrovillar tip-link complex composed of ANKS4B, MYO7B, USH1C, CDHR2 and CDHR5. Interacts with USH1C; the interaction is direct and is required for ANKS4B localization to the tip of microvilli. Interacts with MYO7B; the interaction is direct. May interact with HSPA5. Expressed in kidney and small intestine.

It localises to the cell projection. It is found in the microvillus. Functionally, as part of the intermicrovillar adhesion complex/IMAC plays a role in epithelial brush border differentiation, controlling microvilli organization and length. Plays a role in assembly of the complex. May play a role in cellular response to endoplasmic reticulum stress. In Homo sapiens (Human), this protein is Ankyrin repeat and SAM domain-containing protein 4B.